The following is a 708-amino-acid chain: Leukotoxin translocation ATP-binding protein LktB (708 aa).

Positions 1–126 (MEANHQRNDL…ACYQGQLILV (126 aa)) constitute a Peptidase C39 domain. The 283-residue stretch at 155 to 437 (FLETLIVSIF…LAQLWQDFQQ (283 aa)) folds into the ABC transmembrane type-1 domain. Helical transmembrane passes span 159–179 (LIVS…FQVV), 192–212 (LNII…LSGL), 270–290 (ALTS…MWYY), 296–316 (LVIL…SPIL), and 389–409 (VMVI…LSIG). In terms of domain architecture, ABC transporter spans 469–704 (ISFKNIRFRY…SNGLYSYLHQ (236 aa)). Residue 503-510 (GRSGSGKS) participates in ATP binding.

This sequence belongs to the ABC transporter superfamily. Protein-1 exporter (TC 3.A.1.109) family. As to quaternary structure, homodimer.

The protein resides in the cell inner membrane. It catalyses the reaction ATP + H2O + proteinSide 1 = ADP + phosphate + proteinSide 2.. Functionally, part of the ABC transporter complex LktBD involved in leukotoxin export. Transmembrane domains (TMD) form a pore in the inner membrane and the ATP-binding domain (NBD) is responsible for energy generation. This is Leukotoxin translocation ATP-binding protein LktB (lktB) from Mannheimia haemolytica (Pasteurella haemolytica).